The chain runs to 163 residues: Ureidoglycolate lyase 2 (163 aa).

Belongs to the ureidoglycolate lyase family. In terms of assembly, homodimer. Requires Ni(2+) as cofactor.

It catalyses the reaction (S)-ureidoglycolate = urea + glyoxylate. It participates in nitrogen metabolism; (S)-allantoin degradation. Functionally, catalyzes the catabolism of the allantoin degradation intermediate (S)-ureidoglycolate, generating urea and glyoxylate. Involved in the utilization of allantoin as nitrogen source. The protein is Ureidoglycolate lyase 2 of Rhizobium meliloti (strain 1021) (Ensifer meliloti).